The following is a 223-amino-acid chain: Endonuclease V (223 aa).

Residues Asp-35 and Asp-103 each coordinate Mg(2+).

Belongs to the endonuclease V family. It depends on Mg(2+) as a cofactor.

The protein resides in the cytoplasm. The enzyme catalyses Endonucleolytic cleavage at apurinic or apyrimidinic sites to products with a 5'-phosphate.. In terms of biological role, DNA repair enzyme involved in the repair of deaminated bases. Selectively cleaves double-stranded DNA at the second phosphodiester bond 3' to a deoxyinosine leaving behind the intact lesion on the nicked DNA. The protein is Endonuclease V of Salmonella schwarzengrund (strain CVM19633).